Consider the following 150-residue polypeptide: Large ribosomal subunit protein bL9 (150 aa).

This sequence belongs to the bacterial ribosomal protein bL9 family.

Functionally, binds to the 23S rRNA. The polypeptide is Large ribosomal subunit protein bL9 (Aromatoleum aromaticum (strain DSM 19018 / LMG 30748 / EbN1) (Azoarcus sp. (strain EbN1))).